The chain runs to 396 residues: Maltose/maltodextrin-binding periplasmic protein (396 aa).

A signal peptide spans 1-26; the sequence is MKIKTGARILALSALTTMMFSASALA.

This sequence belongs to the bacterial solute-binding protein 1 family. The complex is composed of two ATP-binding proteins (MalK), two transmembrane proteins (MalG and MalF) and a solute-binding protein (MalE).

The protein localises to the periplasm. Part of the ABC transporter complex MalEFGK involved in maltose/maltodextrin import. Binds maltose and higher maltodextrins. This chain is Maltose/maltodextrin-binding periplasmic protein (malE), found in Klebsiella aerogenes (Enterobacter aerogenes).